The primary structure comprises 362 residues: Cap-specific mRNA (nucleoside-2'-O-)-methyltransferase 1 (362 aa).

The 208-residue stretch at 87 to 294 (SFGNRAGHKL…ERYLVCLGFL (208 aa)) folds into the RrmJ-type SAM-dependent 2'-O-MTase domain. S-adenosyl-L-methionine contacts are provided by glycine 130 and aspartate 207. Lysine 248 acts as the Proton acceptor in catalysis.

It localises to the nucleus. The catalysed reaction is a 5'-end (N(7)-methyl 5'-triphosphoguanosine)-ribonucleoside in mRNA + S-adenosyl-L-methionine = a 5'-end (N(7)-methyl 5'-triphosphoguanosine)-(2'-O-methyl-ribonucleoside) in mRNA + S-adenosyl-L-homocysteine + H(+). Functionally, S-adenosyl-L-methionine-dependent methyltransferase that mediates RNA cap1 2'-O-ribose methylation to the 5'-cap structure of spliced leader and U1 small nuclear RNAs. Methylates the ribose of the first nucleotide of a m(7)GpppG-capped RNA to produce m(7)GpppNmp (cap1). Cap1 modification is linked to higher levels of translation. Recognizes a guanosine cap on RNA independent of its N(7) methylation status. This Trypanosoma cruzi (strain CL Brener) protein is Cap-specific mRNA (nucleoside-2'-O-)-methyltransferase 1.